Reading from the N-terminus, the 81-residue chain is uncharacterized protein (81 aa).

An N-terminal signal peptide occupies residues 1–16 (MNRLTFYGLCLSGAVG). Positions 55–81 (TIDPHHNHHDDHHDSHGHGHGKIKGHH) are disordered. A compositionally biased stretch (basic and acidic residues) spans 57–71 (DPHHNHHDDHHDSHG). A compositionally biased stretch (basic residues) spans 72 to 81 (HGHGKIKGHH).

The protein localises to the secreted. This is an uncharacterized protein from Dictyostelium discoideum (Social amoeba).